The primary structure comprises 1041 residues: FHIP family protein CG3558 (1041 aa).

Ser-490 is subject to Phosphoserine. 5 disordered regions span residues 619 to 648 (RPADEESEATDTTVATTASEADMDHNSSSL), 792 to 818 (KGNEGSPMHHSQQQQMVTNSGQQQGQL), 858 to 879 (SMFSRKSASTSTAPPNGSSASS), 903 to 947 (DGRG…SNSS), and 959 to 986 (SNTTTHSASTLHGLDGGPSTGGFNSEPA). The segment covering 628–637 (TDTTVATTAS) has biased composition (polar residues). Ser-797 is modified (phosphoserine). A compositionally biased stretch (polar residues) spans 800 to 818 (HHSQQQQMVTNSGQQQGQL). Over residues 903–925 (DGRGISQAQTSAGTCETSLSTQP) the composition is skewed to polar residues. Positions 927 to 947 (AGASRTGANATSTAASGSNSS) are enriched in low complexity. Over residues 959 to 968 (SNTTTHSAST) the composition is skewed to polar residues.

It belongs to the FHIP family.

This Drosophila melanogaster (Fruit fly) protein is FHIP family protein CG3558.